Here is a 230-residue protein sequence, read N- to C-terminus: 2,3-bisphosphoglycerate-dependent phosphoglycerate mutase (230 aa).

Substrate-binding positions include 10 to 17 (RHGESKWN), 23 to 24 (TG), arginine 62, 89 to 92 (ERNY), lysine 100, 116 to 117 (RR), and 185 to 186 (GN). Histidine 11 functions as the Tele-phosphohistidine intermediate in the catalytic mechanism. The Proton donor/acceptor role is filled by glutamate 89.

This sequence belongs to the phosphoglycerate mutase family. BPG-dependent PGAM subfamily. Homodimer.

The enzyme catalyses (2R)-2-phosphoglycerate = (2R)-3-phosphoglycerate. It functions in the pathway carbohydrate degradation; glycolysis; pyruvate from D-glyceraldehyde 3-phosphate: step 3/5. Functionally, catalyzes the interconversion of 2-phosphoglycerate and 3-phosphoglycerate. This is 2,3-bisphosphoglycerate-dependent phosphoglycerate mutase from Buchnera aphidicola subsp. Cinara cedri (strain Cc).